Reading from the N-terminus, the 543-residue chain is Organic anion transporter 3 (543 aa).

Residues 1–21 (MTFAELVDRVGSKGPFQLLHT) are Cytoplasmic-facing. Residues 22-42 (VLLGLPILGMANHNLLQIFTA) form a helical membrane-spanning segment. The Extracellular portion of the chain corresponds to 43–124 (PTPAHHCRPP…LVCSSSKLKE (82 aa)). Asparagine 81 carries an N-linked (GlcNAc...) asparagine glycan. A helical transmembrane segment spans residues 125–145 (MAQSVFMAGILVGGLVLGALS). At 146–151 (DRFGRK) the chain is on the cytoplasmic side. The helical transmembrane segment at 152-172 (PILIFSYLLLGASGSGAAFSP) threads the bilayer. Over 173-181 (TFSIYAVFR) the chain is Extracellular. The helical transmembrane segment at 182-202 (FLCGFSISGISLSTAILNVEW) threads the bilayer. The Cytoplasmic segment spans residues 203-212 (VSTRFRAIKS). A helical membrane pass occupies residues 213-233 (IAVGFFYTFGQFILPGLAYAI). Over 234–237 (PQWR) the chain is Extracellular. The chain crosses the membrane as a helical span at residues 238–258 (WLQLTVSVPFLTFFLLSWWLP). At 259 to 328 (ESIRWMVLSG…FRTPVLRRVT (70 aa)) the chain is on the cytoplasmic side. A helical membrane pass occupies residues 329–349 (LCLSLAWFATGFAYYSLAMGV). At 350 to 355 (EEFGVN) the chain is on the extracellular side. The chain crosses the membrane as a helical span at residues 356–376 (LYVLQLIFGGVDVPAKFITML). Over 377 to 388 (SISYLGRHITEG) the chain is Cytoplasmic. Residues 389 to 409 (IVLLLAGGCILALIFVPLDLM) form a helical membrane-spanning segment. Residues 410–412 (TLR) lie on the Extracellular side of the membrane. The helical transmembrane segment at 413-433 (TVLAVFGKGCLSGSFSCLFLY) threads the bilayer. Residues 434–472 (TSELYPTVIRQTGMGASNLWARVGSMTAPLVKITGELQP) lie on the Cytoplasmic side of the membrane. The chain crosses the membrane as a helical span at residues 473–493 (FIPNIIFGTIALLGGSAALFL). Residues 494-543 (PETLNRPLPETIEDIETWSLRAKEPKPEPEAEKSSQRIPLQPCEPGPGPS) are Extracellular-facing. The tract at residues 513–543 (LRAKEPKPEPEAEKSSQRIPLQPCEPGPGPS) is disordered. Positions 514–528 (RAKEPKPEPEAEKSS) are enriched in basic and acidic residues.

Belongs to the major facilitator (TC 2.A.1) superfamily. Organic cation transporter (TC 2.A.1.19) family. As to expression, expressed in kidney.

It is found in the basolateral cell membrane. The catalysed reaction is estrone 3-sulfate(out) + glutarate(in) = estrone 3-sulfate(in) + glutarate(out). The enzyme catalyses estrone 3-sulfate(in) + 2-oxoglutarate(out) = estrone 3-sulfate(out) + 2-oxoglutarate(in). It catalyses the reaction glutarate(in) + 2-oxoglutarate(out) = glutarate(out) + 2-oxoglutarate(in). It carries out the reaction urate(in) + 2-oxoglutarate(out) = urate(out) + 2-oxoglutarate(in). The catalysed reaction is taurocholate(out) + glutarate(in) = taurocholate(in) + glutarate(out). The enzyme catalyses dehydroepiandrosterone 3-sulfate(out) + glutarate(in) = dehydroepiandrosterone 3-sulfate(in) + glutarate(out). It catalyses the reaction prostaglandin F2alpha(out) + glutarate(in) = prostaglandin F2alpha(in) + glutarate(out). It carries out the reaction prostaglandin F2alpha(out) + 2-oxoglutarate(in) = prostaglandin F2alpha(in) + 2-oxoglutarate(out). The catalysed reaction is (R)-carnitine(out) + 2-oxoglutarate(in) = (R)-carnitine(in) + 2-oxoglutarate(out). The enzyme catalyses glutarate(in) + (R)-carnitine(out) = glutarate(out) + (R)-carnitine(in). It catalyses the reaction prostaglandin E2(out) + 2-oxoglutarate(in) = prostaglandin E2(in) + 2-oxoglutarate(out). It carries out the reaction prostaglandin E2(out) + glutarate(in) = prostaglandin E2(in) + glutarate(out). The catalysed reaction is urate(in) + glutarate(out) = urate(out) + glutarate(in). The enzyme catalyses taurocholate(out) + 2-oxoglutarate(in) = taurocholate(in) + 2-oxoglutarate(out). It catalyses the reaction dehydroepiandrosterone 3-sulfate(out) + 2-oxoglutarate(in) = dehydroepiandrosterone 3-sulfate(in) + 2-oxoglutarate(out). It carries out the reaction kynurenate(out) + a dicarboxylate(in) = kynurenate(in) + a dicarboxylate(out). The catalysed reaction is (indol-3-yl)acetate(out) + a dicarboxylate(in) = (indol-3-yl)acetate(in) + a dicarboxylate(out). The enzyme catalyses indoxyl sulfate(out) + a dicarboxylate(in) = indoxyl sulfate(in) + a dicarboxylate(out). It catalyses the reaction N-benzoylglycine(out) + a dicarboxylate(in) = N-benzoylglycine(in) + a dicarboxylate(out). It carries out the reaction 3-carboxy-4-methyl-5-propyl-2-furanpropanoate(out) + a dicarboxylate(in) = 3-carboxy-4-methyl-5-propyl-2-furanpropanoate(in) + a dicarboxylate(out). The catalysed reaction is (6R)-L-erythro-5,6,7,8-tetrahydrobiopterin(out) + a dicarboxylate(in) = (6R)-L-erythro-5,6,7,8-tetrahydrobiopterin(in) + a dicarboxylate(out). The enzyme catalyses L-erythro-7,8-dihydrobiopterin(out) + a dicarboxylate(in) = L-erythro-7,8-dihydrobiopterin(in) + a dicarboxylate(out). It catalyses the reaction L-sepiapterin(out) + a dicarboxylate(in) = L-sepiapterin(in) + a dicarboxylate(out). Its function is as follows. Functions as an organic anion/dicarboxylate exchanger that couples organic anion uptake indirectly to the sodium gradient. Transports organic anions such as estrone 3-sulfate (E1S) and urate in exchange for dicarboxylates such as glutarate or ketoglutarate (2-oxoglutarate). Plays an important role in the excretion of endogenous and exogenous organic anions, especially from the kidney and the brain. E1S transport is pH- and chloride-dependent and may also involve E1S/cGMP exchange. Responsible for the transport of prostaglandin E2 (PGE2) and prostaglandin F2(alpha) (PGF2(alpha)) in the basolateral side of the renal tubule. Involved in the transport of neuroactive tryptophan metabolites kynurenate and xanthurenate. Functions as a biopterin transporters involved in the uptake and the secretion of coenzymes tetrahydrobiopterin (BH4), dihydrobiopterin (BH2) and sepiapterin to urine, thereby determining baseline levels of blood biopterins. May be involved in the basolateral transport of steviol, a metabolite of the popular sugar substitute stevioside. May participate in the detoxification/ renal excretion of drugs and xenobiotics, such as the histamine H(2)-receptor antagonists fexofenadine and cimetidine, the antibiotic benzylpenicillin (PCG), the anionic herbicide 2,4-dichloro-phenoxyacetate (2,4-D), the diagnostic agent p-aminohippurate (PAH), the antiviral acyclovir (ACV), and the mycotoxin ochratoxin (OTA), by transporting these exogenous organic anions across the cell membrane in exchange for dicarboxylates such as 2-oxoglutarate. Contributes to the renal uptake of potent uremic toxins (indoxyl sulfate (IS), indole acetate (IA), hippurate/N-benzoylglycine (HA) and 3-carboxy-4-methyl-5-propyl-2-furanpropionate (CMPF)), pravastatin, PCG, E1S and dehydroepiandrosterone sulfate (DHEAS), and is partly involved in the renal uptake of temocaprilat (an angiotensin-converting enzyme (ACE) inhibitor). May contribute to the release of cortisol in the adrenals. Involved in one of the detoxification systems on the choroid plexus (CP), removes substrates such as E1S or taurocholate (TC), PCG, 2,4-D and PAH, from the cerebrospinal fluid (CSF) to the blood for eventual excretion in urine and bile. Also contributes to the uptake of several other organic compounds such as the prostanoids prostaglandin E(2) and prostaglandin F(2-alpha), L-carnitine, and the therapeutic drugs allopurinol, 6-mercaptopurine (6-MP) and 5-fluorouracil (5-FU). Mediates the transport of PAH, PCG, and the statins pravastatin and pitavastatin, from the cerebrum into the blood circulation across the blood-brain barrier (BBB). In summary, plays a role in the efflux of drugs and xenobiotics, helping reduce their undesired toxicological effects on the body. This is Organic anion transporter 3 (SLC22A8) from Sus scrofa (Pig).